The chain runs to 331 residues: Ribosomal RNA small subunit methyltransferase H (331 aa).

S-adenosyl-L-methionine is bound by residues 49 to 51 (GGH), D68, L102, D116, and Q123.

Belongs to the methyltransferase superfamily. RsmH family.

The protein resides in the cytoplasm. It catalyses the reaction cytidine(1402) in 16S rRNA + S-adenosyl-L-methionine = N(4)-methylcytidine(1402) in 16S rRNA + S-adenosyl-L-homocysteine + H(+). Specifically methylates the N4 position of cytidine in position 1402 (C1402) of 16S rRNA. The chain is Ribosomal RNA small subunit methyltransferase H from Renibacterium salmoninarum (strain ATCC 33209 / DSM 20767 / JCM 11484 / NBRC 15589 / NCIMB 2235).